Reading from the N-terminus, the 379-residue chain is Cytochrome b (379 aa).

4 consecutive transmembrane segments (helical) span residues 34-54 (LGSL…FLTM), 78-99 (WLIR…YLHV), 114-134 (WMTG…GYVL), and 179-199 (FYTF…IHLF). 2 residues coordinate heme b: histidine 84 and histidine 98. Residues histidine 183 and histidine 197 each coordinate heme b. Histidine 202 lines the a ubiquinone pocket. A run of 4 helical transmembrane segments spans residues 227-247 (YKDM…CLID), 289-309 (LGGV…PFYN), 321-341 (MNQI…WIGK), and 348-368 (YIMT…FNVH).

Belongs to the cytochrome b family. As to quaternary structure, the main subunits of complex b-c1 are: cytochrome b, cytochrome c1 and the Rieske protein. The cofactor is heme b.

The protein localises to the mitochondrion inner membrane. In terms of biological role, component of the ubiquinol-cytochrome c reductase complex (complex III or cytochrome b-c1 complex) that is part of the mitochondrial respiratory chain. The b-c1 complex mediates electron transfer from ubiquinol to cytochrome c. Contributes to the generation of a proton gradient across the mitochondrial membrane that is then used for ATP synthesis. This is Cytochrome b (MT-CYB) from Locusta migratoria (Migratory locust).